We begin with the raw amino-acid sequence, 294 residues long: Gap junction delta-3 protein (294 aa).

Residues 1–24 lie on the Cytoplasmic side of the membrane; the sequence is MGEWAFLGSLLDAVQLQSPLVGRL. A helical transmembrane segment spans residues 25 to 45; sequence WLVVMLIFRILVLATVGGAVF. At 46–76 the chain is on the extracellular side; it reads EDEQEEFVCNTLQPGCRQTCYDRAFPVSHYR. Residues 77 to 97 traverse the membrane as a helical segment; sequence FWLFHILLLSAPPVLFVVYSM. At 98-136 the chain is on the cytoplasmic side; sequence HRAGKEAGGAEAAAQCAPGLPEAQCAPCALRARRARRCY. Residues 137–157 form a helical membrane-spanning segment; the sequence is LLSVALRLLAELTFLGGQALL. Residues 158–188 are Extracellular-facing; sequence YGFRVAPHFACAGPPCPHTVDCFVSRPTEKT. Residues 189-209 traverse the membrane as a helical segment; the sequence is VFVLFYFAVGLLSALLSVAEL. The Cytoplasmic segment spans residues 210-294; the sequence is GHLLWKGRPR…PATGRRDLAI (85 aa). The tract at residues 233–294 is disordered; it reads EAQKLLPPPP…PATGRRDLAI (62 aa). Positions 238–250 are enriched in pro residues; the sequence is LPPPPPPPPPPAL.

Belongs to the connexin family. Delta-type subfamily. In terms of assembly, a connexon is composed of a hexamer of connexins. Interacts with TJP1. As to expression, expressed in vascular smooth muscle cells. Found in heart, colon, and artery (at protein level). Found in cerebral cortex, heart, liver, lung, kidney, spleen and testis.

It localises to the cell membrane. The protein localises to the cell junction. It is found in the gap junction. In terms of biological role, one gap junction consists of a cluster of closely packed pairs of transmembrane channels, the connexons, through which materials of low MW diffuse from one cell to a neighboring cell. The polypeptide is Gap junction delta-3 protein (GJD3) (Homo sapiens (Human)).